Reading from the N-terminus, the 372-residue chain is tRNA-specific 2-thiouridylase MnmA (372 aa).

Residues 16–23 (GMSGGVDS) and M42 contribute to the ATP site. Positions 102–104 (NPD) are interaction with target base in tRNA. The Nucleophile role is filled by C107. A disulfide bridge links C107 with C205. G132 serves as a coordination point for ATP. The interaction with tRNA stretch occupies residues 155–157 (KDQ). C205 serves as the catalytic Cysteine persulfide intermediate. The segment at 317-318 (RY) is interaction with tRNA.

It belongs to the MnmA/TRMU family.

The protein localises to the cytoplasm. It catalyses the reaction S-sulfanyl-L-cysteinyl-[protein] + uridine(34) in tRNA + AH2 + ATP = 2-thiouridine(34) in tRNA + L-cysteinyl-[protein] + A + AMP + diphosphate + H(+). Functionally, catalyzes the 2-thiolation of uridine at the wobble position (U34) of tRNA, leading to the formation of s(2)U34. This is tRNA-specific 2-thiouridylase MnmA from Shewanella denitrificans (strain OS217 / ATCC BAA-1090 / DSM 15013).